Reading from the N-terminus, the 448-residue chain is Iroquois-class homeodomain protein irx-3 (448 aa).

Residues 108–170 constitute a DNA-binding region (homeobox; TALE-type); it reads DPSRPKNATR…NARRRLKKEN (63 aa). Disordered stretches follow at residues 171 to 250 and 387 to 410; these read KMTW…NAPE and SGTA…DRSS. A compositionally biased stretch (acidic residues) spans 195-222; it reads KHEDDEEIDLENIDTEDIESKEDLDDPD. The segment covering 223-237 has biased composition (basic and acidic residues); that stretch reads TDIHSDSKTDARSDS. Over residues 238–248 the composition is skewed to acidic residues; the sequence is EASDGFEDLNA. The span at 396–406 shows a compositional bias: basic and acidic residues; that stretch reads AEPKHSTDSLT.

It belongs to the TALE/IRO homeobox family. As to expression, expressed in the neural plate in overlapping patterns with other irx members, which all share an anterior border of expression. Outside the nervous system and at tailbud stages, expressed in the developing otic vesicle, branchial arches, prospective heart region and pronephros.

It is found in the nucleus. Functionally, acts partially redundantly with other irx members in neural patterning. Required for formation of the posterior forebrain, midbrain, hindbrain, and to a lesser extent, spinal cord. Both up-regulates and down-regulates gene expression during neural development. Acts early in neural plate development to induce proneural gene expression and specify a neural precursor state. Also up-regulates repressors that prevent neuronal differentiation. Required during at least two stages of pronephros kidney development; during neurula stages, maintains transcription of key renal genes to define the size and identity of the pronephric anlage, probably in part through regulation of bmp-signaling. Subsequently required for proper formation of the intermediate tubule segment of the pronephros. This is Iroquois-class homeodomain protein irx-3 from Xenopus tropicalis (Western clawed frog).